A 315-amino-acid chain; its full sequence is Ribose-phosphate pyrophosphokinase (315 aa).

Residues 37-39 and 96-97 contribute to the ATP site; these read DGE and RQ. Mg(2+) contacts are provided by histidine 131 and aspartate 171. Lysine 195 is an active-site residue. Residues arginine 197, aspartate 221, and 225-229 each bind D-ribose 5-phosphate; that span reads DTGGT.

This sequence belongs to the ribose-phosphate pyrophosphokinase family. Class I subfamily. Homohexamer. Mg(2+) serves as cofactor.

It localises to the cytoplasm. The catalysed reaction is D-ribose 5-phosphate + ATP = 5-phospho-alpha-D-ribose 1-diphosphate + AMP + H(+). It participates in metabolic intermediate biosynthesis; 5-phospho-alpha-D-ribose 1-diphosphate biosynthesis; 5-phospho-alpha-D-ribose 1-diphosphate from D-ribose 5-phosphate (route I): step 1/1. Involved in the biosynthesis of the central metabolite phospho-alpha-D-ribosyl-1-pyrophosphate (PRPP) via the transfer of pyrophosphoryl group from ATP to 1-hydroxyl of ribose-5-phosphate (Rib-5-P). This Pasteurella multocida (strain Pm70) protein is Ribose-phosphate pyrophosphokinase.